Reading from the N-terminus, the 344-residue chain is Endo-1,4-beta-xylanase UM03411 (344 aa).

A signal peptide spans 1-21 (MKTNFLVLLSALLAASSAVTA). Residues 35 to 338 (QRAGSSLNAA…KPAYNAVLST (304 aa)) enclose the GH10 domain. The active-site Proton donor is the E166. A glycan (N-linked (GlcNAc...) asparagine) is linked at N171. E275 (nucleophile) is an active-site residue. A disulfide bridge connects residues C293 and C299. 2 N-linked (GlcNAc...) asparagine glycosylation sites follow: N310 and N323.

The protein belongs to the glycosyl hydrolase 10 (cellulase F) family.

The protein localises to the secreted. The catalysed reaction is Endohydrolysis of (1-&gt;4)-beta-D-xylosidic linkages in xylans.. Its pathway is glycan degradation; xylan degradation. Endo-1,4-beta-xylanase involved in the hydrolysis of xylan, a major structural heterogeneous polysaccharide found in plant biomass representing the second most abundant polysaccharide in the biosphere, after cellulose. In Mycosarcoma maydis (Corn smut fungus), this protein is Endo-1,4-beta-xylanase UM03411.